A 273-amino-acid chain; its full sequence is Diadenylate cyclase (273 aa).

The next 3 membrane-spanning stretches (helical) occupy residues 12 to 32 (LANI…IMLI), 37 to 57 (AVQL…SGFF), and 61 to 81 (TVEW…IIIF). In terms of domain architecture, DAC spans 82-242 (QPELRRALET…GGELFRDVSE (161 aa)).

It belongs to the adenylate cyclase family. DacA/CdaA subfamily. Probably a homodimer.

It is found in the cell membrane. The catalysed reaction is 2 ATP = 3',3'-c-di-AMP + 2 diphosphate. Catalyzes the condensation of 2 ATP molecules into cyclic di-AMP (c-di-AMP), a signaling compound secreted into the host's cytosol where it triggers the cytosolic surveillance pathway (CSP), a host pathway of innate immunity characterized by expression of beta interferon (IFN-beta) and coregulated genes. Overexpression increases export of c-di-AMP. c-di-AMP is a second messenger that mediates growth, cell wall stability and virulence. The protein is Diadenylate cyclase of Listeria monocytogenes serotype 1/2a (strain 10403S).